A 305-amino-acid chain; its full sequence is Dihydroorotate dehydrogenase B (NAD(+)), catalytic subunit (305 aa).

FMN-binding positions include Ser-23 and 47–48 (KG). Substrate contacts are provided by residues Lys-47 and 71-75 (NAIGL). Residues Asn-101 and Asn-129 each contribute to the FMN site. Asn-129 contacts substrate. Cys-132 (nucleophile) is an active-site residue. FMN contacts are provided by Lys-167 and Ile-193. Substrate is bound at residue 194 to 195 (NT). FMN is bound by residues Gly-219, 245-246 (GG), and 267-268 (GT).

Belongs to the dihydroorotate dehydrogenase family. Type 1 subfamily. Heterotetramer of 2 PyrK and 2 PyrD type B subunits. The cofactor is FMN.

It is found in the cytoplasm. The enzyme catalyses (S)-dihydroorotate + NAD(+) = orotate + NADH + H(+). It participates in pyrimidine metabolism; UMP biosynthesis via de novo pathway; orotate from (S)-dihydroorotate (NAD(+) route): step 1/1. Functionally, catalyzes the conversion of dihydroorotate to orotate with NAD(+) as electron acceptor. The sequence is that of Dihydroorotate dehydrogenase B (NAD(+)), catalytic subunit (pyrD) from Geotalea daltonii (strain DSM 22248 / JCM 15807 / FRC-32) (Geobacter daltonii).